A 691-amino-acid polypeptide reads, in one-letter code: Elongation factor G (691 aa).

The tr-type G domain occupies 8–282; that stretch reads ERVRNIGIAA…AVVDYLPAPI (275 aa). GTP is bound by residues 17-24, 81-85, and 135-138; these read AHIDAGKT, DTPGH, and NKMD.

It belongs to the TRAFAC class translation factor GTPase superfamily. Classic translation factor GTPase family. EF-G/EF-2 subfamily.

It localises to the cytoplasm. Its function is as follows. Catalyzes the GTP-dependent ribosomal translocation step during translation elongation. During this step, the ribosome changes from the pre-translocational (PRE) to the post-translocational (POST) state as the newly formed A-site-bound peptidyl-tRNA and P-site-bound deacylated tRNA move to the P and E sites, respectively. Catalyzes the coordinated movement of the two tRNA molecules, the mRNA and conformational changes in the ribosome. This chain is Elongation factor G, found in Thermosynechococcus vestitus (strain NIES-2133 / IAM M-273 / BP-1).